We begin with the raw amino-acid sequence, 260 residues long: IVAGWSAYPRQLDFVRFREIADKVGAYLFVDMAHFAGLVATGLHPSPVPHAHVVTSTTHKTLAGPRGGIILSNDAEIAKKLNSAVFPGQQGGPLEHVIAGKAVAFKIAASAEFKERQQRTLAGSRILAQRLTQADVAAKGISVLTGGTDVHLVLVDLRHSELDGQQAEDLLAKVEITVNRNSVPFDPRPPMTTSGLRIGTPALATRGFSEEAFAEVAEIIAQTLIAGAEGNTGVLPELKARILELAAAHPLYPNLKKIGE.

Lys-60 is subject to N6-(pyridoxal phosphate)lysine.

This sequence belongs to the SHMT family. In terms of assembly, homodimer. It depends on pyridoxal 5'-phosphate as a cofactor.

The protein localises to the cytoplasm. It catalyses the reaction (6R)-5,10-methylene-5,6,7,8-tetrahydrofolate + glycine + H2O = (6S)-5,6,7,8-tetrahydrofolate + L-serine. It participates in one-carbon metabolism; tetrahydrofolate interconversion. The protein operates within amino-acid biosynthesis; glycine biosynthesis; glycine from L-serine: step 1/1. In terms of biological role, catalyzes the reversible interconversion of serine and glycine with tetrahydrofolate (THF) serving as the one-carbon carrier. This reaction serves as the major source of one-carbon groups required for the biosynthesis of purines, thymidylate, methionine, and other important biomolecules. Also exhibits THF-independent aldolase activity toward beta-hydroxyamino acids, producing glycine and aldehydes, via a retro-aldol mechanism. This chain is Serine hydroxymethyltransferase, found in Corynebacterium sp. (strain P-1).